The following is a 639-amino-acid chain: Chaperone protein DnaK (639 aa).

Thr199 bears the Phosphothreonine; by autocatalysis mark. The span at 602-613 shows a compositional bias: low complexity; the sequence is AQAQQAAAGAEG. The tract at residues 602 to 639 is disordered; it reads AQAQQAAAGAEGQPEDASAKQDDDVVDAEFEEVKDDKK. The span at 625 to 639 shows a compositional bias: acidic residues; the sequence is DVVDAEFEEVKDDKK.

Belongs to the heat shock protein 70 family.

Functionally, acts as a chaperone. The protein is Chaperone protein DnaK of Pseudoalteromonas atlantica (strain T6c / ATCC BAA-1087).